We begin with the raw amino-acid sequence, 318 residues long: Mitochondrial coenzyme A transporter SLC25A42 (318 aa).

3 Solcar repeats span residues 31-117, 129-214, and 224-312; these read RQVL…YKRI, LPPW…LKSL, and PYPF…MQIL. Helical transmembrane passes span 33-53, 89-109, 135-155, 186-206, 230-250, and 293-313; these read VLSS…AVAP, LWRG…IQFS, LLAG…LDLV, LYFG…LSFF, MVFG…LDVV, and LKGP…QILL.

This sequence belongs to the mitochondrial carrier (TC 2.A.29) family.

Its subcellular location is the mitochondrion inner membrane. The enzyme catalyses ADP(out) + CoA(in) = ADP(in) + CoA(out). The catalysed reaction is 3'-dephospho-CoA(in) + ADP(out) = 3'-dephospho-CoA(out) + ADP(in). It carries out the reaction adenosine 3',5'-bisphosphate(in) + ADP(out) = adenosine 3',5'-bisphosphate(out) + ADP(in). It catalyses the reaction AMP(in) + ADP(out) = AMP(out) + ADP(in). The enzyme catalyses dADP(in) + ADP(out) = dADP(out) + ADP(in). The catalysed reaction is ADP(in) + ATP(out) = ADP(out) + ATP(in). Mitochondrial carrier mediating the transport of coenzyme A (CoA) in mitochondria in exchange for intramitochondrial (deoxy)adenine nucleotides and adenosine 3',5'-diphosphate. In Mus musculus (Mouse), this protein is Mitochondrial coenzyme A transporter SLC25A42 (Slc25a42).